A 150-amino-acid polypeptide reads, in one-letter code: Transcriptional repressor NrdR (150 aa).

A zinc finger lies at 3-34; it reads CPFCAFADSKVVDSRPDKGGSTIRRRRECESC. The region spanning 49–139 is the ATP-cone domain; the sequence is PLVIKKDGRR…VYRSFKDITE (91 aa).

The protein belongs to the NrdR family. Zn(2+) serves as cofactor.

Negatively regulates transcription of bacterial ribonucleotide reductase nrd genes and operons by binding to NrdR-boxes. The sequence is that of Transcriptional repressor NrdR from Geotalea uraniireducens (strain Rf4) (Geobacter uraniireducens).